We begin with the raw amino-acid sequence, 404 residues long: Double-stranded RNA-binding protein 5 (404 aa).

2 consecutive DRBM domains span residues 1-70 (MYKN…RLSL) and 87-155 (VYKN…SLKQ). Disordered stretches follow at residues 195-236 (RRRR…STEE), 263-320 (GGRT…RRNA), and 336-362 (RRRP…FSDP). Over residues 263–280 (GGRTQDTASPAPAAAAAS) the composition is skewed to low complexity. Basic residues predominate over residues 302 to 316 (AGAHAARRHAARQGG).

Its function is as follows. Binds double-stranded RNA. The sequence is that of Double-stranded RNA-binding protein 5 (DRB5) from Oryza sativa subsp. japonica (Rice).